The primary structure comprises 283 residues: Acetyl-coenzyme A carboxylase carboxyl transferase subunit beta (283 aa).

Residues 29–283 enclose the CoA carboxyltransferase N-terminal domain; that stretch reads LWISCPKCQQ…VKIHSMKGAF (255 aa). Residues C33, C36, C51, and C54 each coordinate Zn(2+). The segment at 33-54 adopts a C4-type zinc-finger fold; that stretch reads CPKCQQSIYHKDLGKYKTCPNC.

The protein belongs to the AccD/PCCB family. As to quaternary structure, acetyl-CoA carboxylase is a heterohexamer composed of biotin carboxyl carrier protein (AccB), biotin carboxylase (AccC) and two subunits each of ACCase subunit alpha (AccA) and ACCase subunit beta (AccD). It depends on Zn(2+) as a cofactor.

It localises to the cytoplasm. It carries out the reaction N(6)-carboxybiotinyl-L-lysyl-[protein] + acetyl-CoA = N(6)-biotinyl-L-lysyl-[protein] + malonyl-CoA. Its pathway is lipid metabolism; malonyl-CoA biosynthesis; malonyl-CoA from acetyl-CoA: step 1/1. Functionally, component of the acetyl coenzyme A carboxylase (ACC) complex. Biotin carboxylase (BC) catalyzes the carboxylation of biotin on its carrier protein (BCCP) and then the CO(2) group is transferred by the transcarboxylase to acetyl-CoA to form malonyl-CoA. This chain is Acetyl-coenzyme A carboxylase carboxyl transferase subunit beta, found in Ligilactobacillus salivarius (strain UCC118) (Lactobacillus salivarius).